A 375-amino-acid chain; its full sequence is Queuine tRNA-ribosyltransferase (375 aa).

Residue Asp-89 is the Proton acceptor of the active site. Residues 89–93 (DSGGF), Asp-143, Gln-187, and Gly-214 contribute to the substrate site. The tract at residues 245 to 251 (GVGKPED) is RNA binding. The active-site Nucleophile is Asp-264. Residues 269 to 273 (TRNAR) form an RNA binding; important for wobble base 34 recognition region. The Zn(2+) site is built by Cys-302, Cys-304, Cys-307, and His-333.

The protein belongs to the queuine tRNA-ribosyltransferase family. In terms of assembly, homodimer. Within each dimer, one monomer is responsible for RNA recognition and catalysis, while the other monomer binds to the replacement base PreQ1. The cofactor is Zn(2+).

It catalyses the reaction 7-aminomethyl-7-carbaguanine + guanosine(34) in tRNA = 7-aminomethyl-7-carbaguanosine(34) in tRNA + guanine. It functions in the pathway tRNA modification; tRNA-queuosine biosynthesis. Functionally, catalyzes the base-exchange of a guanine (G) residue with the queuine precursor 7-aminomethyl-7-deazaguanine (PreQ1) at position 34 (anticodon wobble position) in tRNAs with GU(N) anticodons (tRNA-Asp, -Asn, -His and -Tyr). Catalysis occurs through a double-displacement mechanism. The nucleophile active site attacks the C1' of nucleotide 34 to detach the guanine base from the RNA, forming a covalent enzyme-RNA intermediate. The proton acceptor active site deprotonates the incoming PreQ1, allowing a nucleophilic attack on the C1' of the ribose to form the product. After dissociation, two additional enzymatic reactions on the tRNA convert PreQ1 to queuine (Q), resulting in the hypermodified nucleoside queuosine (7-(((4,5-cis-dihydroxy-2-cyclopenten-1-yl)amino)methyl)-7-deazaguanosine). The sequence is that of Queuine tRNA-ribosyltransferase from Aliivibrio fischeri (strain ATCC 700601 / ES114) (Vibrio fischeri).